We begin with the raw amino-acid sequence, 273 residues long: Holocytochrome c-type synthase (273 aa).

Residues 1 to 18 (MGLSASSPAATAQSAAEP) are compositionally biased toward low complexity. The tract at residues 1–39 (MGLSASSPAATAQSAAEPSKQHQVASPPSECPMHQEKMR) is disordered. 2 HRM repeats span residues 30–35 (ECPMHQ) and 40–45 (GCPMHM).

This sequence belongs to the cytochrome c-type heme lyase family.

Its subcellular location is the mitochondrion inner membrane. The catalysed reaction is holo-[cytochrome c] = apo-[cytochrome c] + heme b. In terms of biological role, lyase that catalyzes the covalent linking of the heme group to the cytochrome C apoprotein to produce the mature functional cytochrome. This chain is Holocytochrome c-type synthase (HCCS), found in Gallus gallus (Chicken).